Here is a 421-residue protein sequence, read N- to C-terminus: Large ribosomal subunit protein uL4 (421 aa).

Position 2 is an N-acetylalanine (A2). An N6-acetyllysine modification is found at K14. R97 carries the post-translational modification Omega-N-methylarginine. K106 is modified (N6-acetyllysine). K239 participates in a covalent cross-link: Glycyl lysine isopeptide (Lys-Gly) (interchain with G-Cter in SUMO2). K259 bears the N6-acetyllysine mark. T266 is modified (phosphothreonine). Residues S290 and S295 each carry the phosphoserine modification. A Citrulline modification is found at R300. A Glycyl lysine isopeptide (Lys-Gly) (interchain with G-Cter in SUMO2) cross-link involves residue K327. 2 positions are modified to N6-acetyllysine: K333 and K353. K364 is modified (N6-acetyllysine; alternate). K364 is covalently cross-linked (Glycyl lysine isopeptide (Lys-Gly) (interchain with G-Cter in SUMO1); alternate). A Phosphoserine modification is found at S365. Positions 365 to 379 (SEKIVPEKGAGDKKP) are enriched in basic and acidic residues. Residues 365–421 (SEKIVPEKGAGDKKPAVGKKGKKPVDAKKLKKPAGKKVVTKKPAEKKPTTEEKKSAA) form a disordered region. The span at 393–404 (KLKKPAGKKVVT) shows a compositional bias: basic residues. Positions 406–421 (KPAEKKPTTEEKKSAA) are enriched in basic and acidic residues.

It belongs to the universal ribosomal protein uL4 family. Component of the large ribosomal subunit. May bind IPO9 with low affinity. Interacts with RBM3. Post-translationally, citrullinated by PADI4.

Its subcellular location is the cytoplasm. Component of the large ribosomal subunit. The ribosome is a large ribonucleoprotein complex responsible for the synthesis of proteins in the cell. The sequence is that of Large ribosomal subunit protein uL4 (Rpl4) from Rattus norvegicus (Rat).